We begin with the raw amino-acid sequence, 828 residues long: Periplasmic nitrate reductase (828 aa).

A signal peptide (tat-type signal) is located at residues methionine 1 to alanine 31. One can recognise a 4Fe-4S Mo/W bis-MGD-type domain in the interval isoleucine 39–aspartate 95. Positions 46, 49, 53, and 81 each coordinate [4Fe-4S] cluster. Residues lysine 83, glutamine 150, asparagine 175, cysteine 179, tryptophan 212 to methionine 219, serine 243 to histidine 247, glutamine 262 to aspartate 264, methionine 372, glutamine 376, asparagine 482, serine 508 to aspartate 509, lysine 531, aspartate 558, and threonine 718 to threonine 727 each bind Mo-bis(molybdopterin guanine dinucleotide). Phenylalanine 794 provides a ligand contact to substrate. Residues asparagine 802 and lysine 819 each coordinate Mo-bis(molybdopterin guanine dinucleotide).

It belongs to the prokaryotic molybdopterin-containing oxidoreductase family. NasA/NapA/NarB subfamily. As to quaternary structure, component of the periplasmic nitrate reductase NapAB complex composed of NapA and NapB. It depends on [4Fe-4S] cluster as a cofactor. Requires Mo-bis(molybdopterin guanine dinucleotide) as cofactor. Predicted to be exported by the Tat system. The position of the signal peptide cleavage has not been experimentally proven.

It is found in the periplasm. The catalysed reaction is 2 Fe(II)-[cytochrome] + nitrate + 2 H(+) = 2 Fe(III)-[cytochrome] + nitrite + H2O. Its function is as follows. Catalytic subunit of the periplasmic nitrate reductase complex NapAB. Receives electrons from NapB and catalyzes the reduction of nitrate to nitrite. This Salmonella schwarzengrund (strain CVM19633) protein is Periplasmic nitrate reductase.